The following is a 34-amino-acid chain: Photosystem II reaction center protein M (34 aa).

A helical transmembrane segment spans residues 7–27 (GFIATILFVLVPTVFLLILYI).

The protein belongs to the PsbM family. As to quaternary structure, PSII is composed of 1 copy each of membrane proteins PsbA, PsbB, PsbC, PsbD, PsbE, PsbF, PsbH, PsbI, PsbJ, PsbK, PsbL, PsbM, PsbT, PsbX, PsbY, PsbZ, Psb30/Ycf12, peripheral proteins PsbO, CyanoQ (PsbQ), PsbU, PsbV and a large number of cofactors. It forms dimeric complexes.

It is found in the cellular thylakoid membrane. Its function is as follows. One of the components of the core complex of photosystem II (PSII). PSII is a light-driven water:plastoquinone oxidoreductase that uses light energy to abstract electrons from H(2)O, generating O(2) and a proton gradient subsequently used for ATP formation. It consists of a core antenna complex that captures photons, and an electron transfer chain that converts photonic excitation into a charge separation. This subunit is found at the monomer-monomer interface. The protein is Photosystem II reaction center protein M of Picosynechococcus sp. (strain ATCC 27264 / PCC 7002 / PR-6) (Agmenellum quadruplicatum).